The following is a 102-amino-acid chain: Large ribosomal subunit protein bL21 (102 aa).

It belongs to the bacterial ribosomal protein bL21 family. Part of the 50S ribosomal subunit. Contacts protein L20.

This protein binds to 23S rRNA in the presence of protein L20. The chain is Large ribosomal subunit protein bL21 from Bacillus anthracis (strain A0248).